The chain runs to 432 residues: Fibroleukin (432 aa).

The first 19 residues, 1–19 (MRLPGWLWLSSAVLAACRA), serve as a signal peptide directing secretion. A glycan (N-linked (GlcNAc...) asparagine) is linked at asparagine 24. Residues 71–157 (GSMEEVLKEV…QGRLETLHLV (87 aa)) adopt a coiled-coil conformation. Positions 100 to 122 (QADDHRDPGGNGGNGAETAEDSR) are disordered. 4 N-linked (GlcNAc...) asparagine glycosylation sites follow: asparagine 172, asparagine 228, asparagine 256, and asparagine 329. A Fibrinogen C-terminal domain is found at 197–429 (PVQHLIYKDC…QAKMMIRPKN (233 aa)). A disulfide bridge links cysteine 206 with cysteine 235. A disulfide bridge connects residues cysteine 364 and cysteine 377.

As to quaternary structure, homotetramer; disulfide-linked. In terms of tissue distribution, constitutively expressed in cytotoxic T-cells.

The protein localises to the secreted. Functionally, converts prothrombin to thrombin. This Mus musculus (Mouse) protein is Fibroleukin (Fgl2).